A 2282-amino-acid polypeptide reads, in one-letter code: Acetyl-CoA carboxylase (2282 aa).

Positions 16–515 (NIEKILIANN…HTGWLDQLIS (500 aa)) constitute a Biotin carboxylation domain. The 191-residue stretch at 170–360 (YSECNGVPSE…LPATQLQIAM (191 aa)) folds into the ATP-grasp domain. 196–253 (AQRVGFPAMIKASEGGGGKGIRKVTSMEDLESSFRQVQNEVPGSPIFFMKLVSNARHL) lines the ATP pocket. The Mn(2+) site is built by Glu319, Glu331, and Asn333. Residue Arg335 is part of the active site. Residues 646-720 (FSQEYDPSIL…APGAIIANLE (75 aa)) enclose the Biotinyl-binding domain. Lys687 carries the N6-biotinyllysine modification. Residues 1109–1129 (GSNSGSPTYGSPLIRSISSSG) are compositionally biased toward low complexity. Residues 1109-1141 (GSNSGSPTYGSPLIRSISSSGGSSGGSGFQISP) are disordered. The CoA carboxyltransferase N-terminal domain maps to 1495–1851 (PYPIMDAVQR…SGGEMVPIIS (357 aa)). Positions 1495–2178 (PYPIMDAVQR…EEDKLKLIDK (684 aa)) are carboxyltransferase. Positions 1761, 2068, and 2070 each coordinate CoA. A CoA carboxyltransferase C-terminal domain is found at 1852 to 2178 (PIDSPHRDIE…EEDKLKLIDK (327 aa)).

It depends on biotin as a cofactor. Mn(2+) serves as cofactor.

The protein localises to the cytoplasm. The enzyme catalyses hydrogencarbonate + acetyl-CoA + ATP = malonyl-CoA + ADP + phosphate + H(+). The catalysed reaction is N(6)-biotinyl-L-lysyl-[protein] + hydrogencarbonate + ATP = N(6)-carboxybiotinyl-L-lysyl-[protein] + ADP + phosphate + H(+). Its pathway is lipid metabolism; malonyl-CoA biosynthesis; malonyl-CoA from acetyl-CoA: step 1/1. In terms of biological role, catalyzes the rate-limiting reaction in the biogenesis of long-chain fatty acids. Carries out three functions: biotin carboxyl carrier protein, biotin carboxylase and carboxyltransferase. This Dictyostelium discoideum (Social amoeba) protein is Acetyl-CoA carboxylase (accA).